The chain runs to 283 residues: Nucleotide-binding protein ABBFA_002973 (283 aa).

Gly9–Ser16 serves as a coordination point for ATP. Residue Asp59–Ser62 participates in GTP binding.

It belongs to the RapZ-like family.

Functionally, displays ATPase and GTPase activities. The sequence is that of Nucleotide-binding protein ABBFA_002973 from Acinetobacter baumannii (strain AB307-0294).